A 279-amino-acid polypeptide reads, in one-letter code: Ribosomal RNA small subunit methyltransferase A (279 aa).

The S-adenosyl-L-methionine site is built by Asn-27, Leu-29, Gly-54, Glu-76, Asp-102, and Asn-127.

It belongs to the class I-like SAM-binding methyltransferase superfamily. rRNA adenine N(6)-methyltransferase family. RsmA subfamily.

Its subcellular location is the cytoplasm. It catalyses the reaction adenosine(1518)/adenosine(1519) in 16S rRNA + 4 S-adenosyl-L-methionine = N(6)-dimethyladenosine(1518)/N(6)-dimethyladenosine(1519) in 16S rRNA + 4 S-adenosyl-L-homocysteine + 4 H(+). Functionally, specifically dimethylates two adjacent adenosines (A1518 and A1519) in the loop of a conserved hairpin near the 3'-end of 16S rRNA in the 30S particle. May play a critical role in biogenesis of 30S subunits. The chain is Ribosomal RNA small subunit methyltransferase A from Mesorhizobium japonicum (strain LMG 29417 / CECT 9101 / MAFF 303099) (Mesorhizobium loti (strain MAFF 303099)).